A 313-amino-acid chain; its full sequence is Acetylglutamate kinase (313 aa).

Residues 84–85 (GG), arginine 106, and asparagine 210 each bind substrate.

Belongs to the acetylglutamate kinase family. ArgB subfamily.

Its subcellular location is the cytoplasm. The catalysed reaction is N-acetyl-L-glutamate + ATP = N-acetyl-L-glutamyl 5-phosphate + ADP. Its pathway is amino-acid biosynthesis; L-arginine biosynthesis; N(2)-acetyl-L-ornithine from L-glutamate: step 2/4. Its function is as follows. Catalyzes the ATP-dependent phosphorylation of N-acetyl-L-glutamate. The chain is Acetylglutamate kinase from Gluconacetobacter diazotrophicus (strain ATCC 49037 / DSM 5601 / CCUG 37298 / CIP 103539 / LMG 7603 / PAl5).